We begin with the raw amino-acid sequence, 319 residues long: Large ribosomal subunit protein uL10 (319 aa).

The segment at 289–319 (EQKSAAPAAKEEAPKEDSEESDEDMGFGLFD) is disordered.

This sequence belongs to the universal ribosomal protein uL10 family. In terms of assembly, P0 forms a pentameric complex by interaction with dimers of P1 and P2. Phosphorylated.

The protein resides in the nucleus. Its subcellular location is the cytoplasm. In terms of biological role, ribosomal protein P0 is the functional equivalent of E.coli protein L10. This Danio rerio (Zebrafish) protein is Large ribosomal subunit protein uL10 (rplp0).